A 331-amino-acid chain; its full sequence is HTH-type transcriptional regulator GntR (331 aa).

An HTH lacI-type domain is found at 6-60 (PVLQDVADRVGVTKMTVSRFLRNPEQVSVALRGKIAAALDELGYIPNRAPDILSN). Residues 8–27 (LQDVADRVGVTKMTVSRFLR) constitute a DNA-binding region (H-T-H motif).

It functions in the pathway carbohydrate acid metabolism; D-gluconate degradation [regulation]. Its function is as follows. Negative regulator for the gluconate utilization system GNT-I, the gntUKR operon. This Escherichia coli O6:H1 (strain CFT073 / ATCC 700928 / UPEC) protein is HTH-type transcriptional regulator GntR (gntR).